Here is an 82-residue protein sequence, read N- to C-terminus: Toxin NaTx-13 (82 aa).

The 65-residue stretch at Pro6–Gly70 folds into the LCN-type CS-alpha/beta domain. Disulfide bonds link Cys16/Cys69, Cys20/Cys44, Cys30/Cys49, and Cys34/Cys51.

It belongs to the long (4 C-C) scorpion toxin superfamily. Sodium channel inhibitor family. As to expression, expressed by the venom gland.

It is found in the secreted. In terms of biological role, probable sodium channel inhibitor. This is Toxin NaTx-13 from Centruroides sculpturatus (Arizona bark scorpion).